Reading from the N-terminus, the 468-residue chain is Neuronal acetylcholine receptor subunit alpha-5 (468 aa).

The signal sequence occupies residues M1–G22. Residues R23 to T254 lie on the Extracellular side of the membrane. Residues N155, N183, and N229 are each glycosylated (N-linked (GlcNAc...) asparagine). Cysteines 170 and 184 form a disulfide. An intrachain disulfide couples C234 to C235. 3 helical membrane passes run L255–P275, I282–I302, and L317–I337. Residues H338–R429 lie on the Cytoplasmic side of the membrane. Residues M430–I451 traverse the membrane as a helical segment. Topologically, residues Y452–K468 are extracellular.

The protein belongs to the ligand-gated ion channel (TC 1.A.9) family. Acetylcholine receptor (TC 1.A.9.1) subfamily. Alpha-5/CHRNA5 sub-subfamily. As to quaternary structure, neuronal AChR that forms heteropentamers composed of two different type of subunits: alpha and non-alpha (beta). CHRNA5/alpha-5 subunit is only able to form functional nAChRs when co-assembled with another alpha subunit, can be combined to CHRNA4/alpha-4 or CHRNA3/alpha-3 and CHRNB4/beta-4 or CHRNB2/beta-2 to give rise to functional receptors. Interacts with LYPD6.

It is found in the synaptic cell membrane. The protein resides in the cell membrane. It carries out the reaction Ca(2+)(in) = Ca(2+)(out). The enzyme catalyses K(+)(in) = K(+)(out). The catalysed reaction is Na(+)(in) = Na(+)(out). Activated by a myriad of ligands such as acetylcholine, cytisine, nicotine, choline and epibatidine. In terms of biological role, component of neuronal acetylcholine receptors (nAChRs) that function as pentameric, ligand-gated cation channels with high calcium permeability among other activities. nAChRs are excitatory neurotrasnmitter receptors formed by a collection of nAChR subunits known to mediate synaptic transmission in the nervous system and the neuromuscular junction. Each nAchR subunit confers differential attributes to channel properties, including activation, deactivation and desensitization kinetics, pH sensitivity, cation permeability, and binding to allosteric modulators. Has an accessory rather than functional role and is only able to form functional nAChRs when co-assembled with another beta subunit. Participates in pentameric assemblies along with CHRNA3, CHRNA4, CHRNB2 and CHRNB4. Increases receptor sensitivity to acetylcholine and nicotine when associated with CHRNA4 and CHRNB2. Plays a role in nicotine addiction. The sequence is that of Neuronal acetylcholine receptor subunit alpha-5 from Homo sapiens (Human).